A 243-amino-acid polypeptide reads, in one-letter code: ADP-ribosylation factor-like protein 10 (243 aa).

Residues 83 to 90, 127 to 131, and 184 to 187 each bind GTP; these read GLDGSGKS, EIGGS, and NKQD.

This sequence belongs to the small GTPase superfamily. Arf family.

The sequence is that of ADP-ribosylation factor-like protein 10 (Arl10) from Mus musculus (Mouse).